The primary structure comprises 201 residues: MSKVLVLKSSILATYSQSNQLADFFVEQWKTAHAGDEITVRDLAAQPIPVLDGELVGALRPSDAALTPRQQEALALSDELIAELQANDVIVMAAPMYNFNIPTQLKNYFDLIARAGVTFRYTEKGPEGLITGKRAIILTSRGGIHKDTPTDLVVPYLRLFLGFIGITDVKFVFAEGIAYGPEVATKAQADAKELLTQVVSA.

FMN is bound by residues Ser10, 16–18, 96–99, and 140–143; these read SQS, MYNF, and SRGG.

Belongs to the azoreductase type 1 family. In terms of assembly, homodimer. The cofactor is FMN.

It carries out the reaction 2 a quinone + NADH + H(+) = 2 a 1,4-benzosemiquinone + NAD(+). The catalysed reaction is N,N-dimethyl-1,4-phenylenediamine + anthranilate + 2 NAD(+) = 2-(4-dimethylaminophenyl)diazenylbenzoate + 2 NADH + 2 H(+). In terms of biological role, quinone reductase that provides resistance to thiol-specific stress caused by electrophilic quinones. Its function is as follows. Also exhibits azoreductase activity. Catalyzes the reductive cleavage of the azo bond in aromatic azo compounds to the corresponding amines. This is FMN-dependent NADH:quinone oxidoreductase from Yersinia enterocolitica serotype O:8 / biotype 1B (strain NCTC 13174 / 8081).